Here is a 429-residue protein sequence, read N- to C-terminus: Hemoglobinase (429 aa).

Positions 1-19 (MMLFSLFLISILHILLVKC) are cleaved as a signal peptide. The propeptide occupies 20–31 (QLDTNYEVSDET). His-151 is a catalytic residue. The tract at residues 288-309 (FQGSRDKSSSENDEPPMKPRHS) is disordered. Residues 292–429 (RDKSSSENDE…INEAIIKICG (138 aa)) constitute a propeptide that is removed on maturation.

It belongs to the peptidase C13 family.

The catalysed reaction is Hydrolysis of proteins and small molecule substrates at -Asn-|-Xaa- bonds.. Its function is as follows. This protease is used by the parasite for degradation of the host globin. This Schistosoma mansoni (Blood fluke) protein is Hemoglobinase.